The sequence spans 270 residues: Phosphonoacetaldehyde hydrolase (270 aa).

The Nucleophile role is filled by Asp11. 2 residues coordinate Mg(2+): Asp11 and Ala13. Lys53 (schiff-base intermediate with substrate) is an active-site residue. Asp187 is a binding site for Mg(2+).

It belongs to the HAD-like hydrolase superfamily. PhnX family. As to quaternary structure, homodimer. The cofactor is Mg(2+).

The enzyme catalyses phosphonoacetaldehyde + H2O = acetaldehyde + phosphate + H(+). Involved in phosphonate degradation. The protein is Phosphonoacetaldehyde hydrolase of Salmonella paratyphi C (strain RKS4594).